The sequence spans 277 residues: Probable ketoamine kinase HMPREF0351_12196 (277 aa).

84–86 (EWI) lines the ATP pocket. The active-site Proton acceptor is the Asp186.

It belongs to the fructosamine kinase family.

The catalysed reaction is N(6)-(D-ribulosyl)-L-lysine + ATP = N(6)-(3-O-phospho-D-ribulosyl)-L-lysine + ADP + H(+). It catalyses the reaction N-(D-ribulosyl)-cadaverine + ATP = N-(3-O-phospho-D-ribulosyl)-cadaverine + ADP + H(+). The enzyme catalyses N(6)-(D-erythrulosyl)-L-lysine + ATP = N(6)-(3-O-phospho-D-erythrulosyl)-L-lysine + ADP + H(+). It carries out the reaction N-(D-erythrulosyl)-cadaverine + ATP = N-(3-O-phospho-D-erythrulosyl)-cadaverine + ADP + H(+). The catalysed reaction is N(6)-D-ribulosyl-L-lysyl-[protein] + ATP = N(6)-(3-O-phospho-D-ribulosyl)-L-lysyl-[protein] + ADP + H(+). It catalyses the reaction N(6)-(D-erythrulosyl)-L-lysyl-[protein] + ATP = N(6)-(3-O-phospho-D-erythrulosyl)-L-lysyl-[protein] + ADP + H(+). In terms of biological role, ketoamine kinase that phosphorylates ketoamines, such as erythruloselysine, erythrulosecadaverine, ribuloselysine and ribulosecadaverine, on the third carbon of the sugar moiety to generate ketoamine 3-phosphate. Has higher activity on free lysine (erythruloselysine and ribuloselysine), than on ribuloselysine and erythruloselysine residues on glycated proteins. In Enterococcus faecium (strain ATCC BAA-472 / TX0016 / DO), this protein is Probable ketoamine kinase HMPREF0351_12196.